The following is a 429-amino-acid chain: ETS domain-containing protein Elk-1 (429 aa).

Residues 5-86 (VTLWQFLLQL…SGQKFVYKFV (82 aa)) constitute a DNA-binding region (ETS). Disordered regions lie at residues 119 to 146 (HAGPGDTATGKPGTPKGAGMTGQGGLAR), 165 to 204 (SLQPQPQPPIPPRPASVLPNTTPAGVPAPASGSRSTSPNP), and 227 to 253 (APNQKSEELSLDPSFGHPQPPEVKVEG). Positions 169–178 (QPQPPIPPRP) are enriched in pro residues. Residues lysine 231, lysine 250, and lysine 255 each participate in a glycyl lysine isopeptide (Lys-Gly) (interchain with G-Cter in SUMO) cross-link. The segment covering 302–312 (STSTTEITQPQ) has biased composition (polar residues). Positions 302 to 354 (STSTTEITQPQKGRKPRDLELPLSPSLLGGQGPERTPGSGTSSGLQAPGPALT) are disordered. Position 325 is a phosphoserine; by MAPK1 (serine 325). Phosphothreonine; by MAPK1 occurs at positions 337, 354, 364, and 369. A sufficient for interaction with MAD2L2 region spans residues 350–400 (GPALTPSLLPTHTLTPVLLTPSSLPPSIHFWSTLSPIAPRSPAKLSFQFPS). The O-linked (GlcNAc) threonine glycan is linked to threonine 382. Serine 384 is modified (phosphoserine; by MAPK1 and MAPK8). The residue at position 390 (serine 390) is a Phosphoserine; by MAPK1. Phosphothreonine; by MAPK1 is present on threonine 418. The residue at position 423 (serine 423) is a Phosphoserine; by MAPK1.

This sequence belongs to the ETS family. In terms of assembly, interacts in its sumoylated form with PIAS2/PIASX which enhances its transcriptional activator activity. Interacts with MAD2L2; the interaction is direct and promotes phosphorylation by the kinases MAPK8 and/or MAPK9. Interacts with POU1F1. Post-translationally, sumoylation represses transcriptional activator activity as it results in recruitment of HDAC2 to target gene promoters which leads to decreased histone acetylation and reduced transactivator activity. It also regulates nuclear retention. On mitogenic stimulation, phosphorylated on C-terminal serine and threonine residues by MAPK1 but also MAPK8 and/or MAPK9. Phosphorylation leads to loss of sumoylation and restores transcriptional activator activity. Phosphorylated and activated by CaMK4, MAPK11, MAPK12 and MAPK14. Upon bFGF stimulus, phosphorylated by PAK1. Phosphorylated by PRP4K at Thr-418; phosphorylation activation ELK1 transcriptional activity. In terms of tissue distribution, predominantly expressed in the brain, and to a lesser extent in the heart, liver and muscle.

Its subcellular location is the nucleus. Functionally, transcription factor that binds to purine-rich DNA sequences. Forms a ternary complex with SRF and the ETS and SRF motifs of the serum response element (SRE) on the promoter region of immediate early genes such as FOS and IER2. Induces target gene transcription upon JNK and MAPK-signaling pathways stimulation. The protein is ETS domain-containing protein Elk-1 of Mus musculus (Mouse).